A 671-amino-acid chain; its full sequence is Solute carrier family 5 member 4 (671 aa).

Residues 1–38 (MPAMGTALPRAMASTASVSTSTGSSELSSLSDNINNPA) lie on the Cytoplasmic side of the membrane. The helical transmembrane segment at 39–59 (DISVIVIYFVVVMAVGVWAMV) threads the bilayer. The Extracellular portion of the chain corresponds to 60–65 (KTNRST). Residues 66-86 (VGGFFLAGRSMTWWPMGASLF) traverse the membrane as a helical segment. Residues 87-89 (ASN) lie on the Cytoplasmic side of the membrane. Residues 90–110 (IGSGHFVGLAGTGAATGIAVT) form a helical membrane-spanning segment. Residues 111-116 (AFESHS) are Extracellular-facing. A helical membrane pass occupies residues 117 to 137 (FALLLVLGWFFVPIYIKAGVM). At 138 to 159 (TMPEYLRKRFGGKRLQIYLSVL) the chain is on the cytoplasmic side. A helical transmembrane segment spans residues 160-180 (SLFICVILTISADIFSGAIFI). K181 is a topological domain (extracellular). A helical transmembrane segment spans residues 182–202 (LALGLDLYLAIFILLAITAVF). Residues 203–218 (TITGGLASVIYTDTLQ) lie on the Cytoplasmic side of the membrane. A helical membrane pass occupies residues 219–239 (AIIMLVGSFILMIYAFVEVGG). Residues 240 to 288 (YESFTEKYMNAIPSVVEGDNLTISPKCYTPQPDSFHIFRDAVTGDIPWP) are Extracellular-facing. The helical transmembrane segment at 289-309 (GTAFGMPITALWYWCINQVIV) threads the bilayer. Residues 310 to 324 (QRCLCGKNMSHVKAA) lie on the Cytoplasmic side of the membrane. Residues 325 to 345 (CIVCGYLKLLPIFFMVMPGMI) traverse the membrane as a helical segment. At 346–378 (SRILYTDMVACVVPSECVKQCGVDVGCTNYAYP) the chain is on the extracellular side. Residues 379–399 (MLVLKLMPMGLRGLMLSVMLA) form a helical membrane-spanning segment. Topologically, residues 400–434 (SLMSSLTSIFNSASTLFTMDLYTKIRKKASERELL) are cytoplasmic. A helical membrane pass occupies residues 435–455 (IAGRLFVSVLIVTSILWVPIV). Residues 456–467 (EVSQGGQLIHYT) lie on the Extracellular side of the membrane. A helical transmembrane segment spans residues 468–488 (EAISSYLGPPIAAVFLVAIFC). Topologically, residues 489–494 (KRVNEQ) are cytoplasmic. The chain crosses the membrane as a helical span at residues 495 to 515 (GAFWGLMVGLVLGLIRMIAEF). At 516–537 (SYGTGSCLAPSSCPKVICGVHY) the chain is on the extracellular side. A helical transmembrane segment spans residues 538-558 (LYYAIILFFVSILVILGVSYL). Residues 559 to 650 (TKPIPDVHLY…DTSEKPFWRT (92 aa)) are Cytoplasmic-facing. Residues 583–593 (DLDAEDREENE) are compositionally biased toward acidic residues. The disordered stretch occupies residues 583-604 (DLDAEDREENEADARTEEDQTE). Positions 594–604 (ADARTEEDQTE) are enriched in basic and acidic residues. A helical transmembrane segment spans residues 651 to 671 (VVNVNVIVLLAVAAFFYGYFA).

It belongs to the sodium:solute symporter (SSF) (TC 2.A.21) family.

It is found in the cell membrane. Its function is as follows. Generates D-glucose-induced depolarization in a pH-dependent and Na(+)-independent manner, with activity in acidic conditions (pH 5) but not neutral conditions. The chain is Solute carrier family 5 member 4 from Rattus norvegicus (Rat).